The chain runs to 347 residues: MAVRIDGSYGEGGGQILRTSIALSALLGKPVEIVNIRAKRANPGLQPQHLTGVSAAALLTDAEVEGAAKGSTRLFFKPKALKCGTFNIDIGTAGSISLVVQTLAPILLYAPCPTKLVITGGTDVAWAPPIDYMRFVFARYLTRFGARIAIELVKRGHYPRGGGKAVVQAEPAGRLRAVDSVEFGRPAKIAGVSHAVNLPPHVAERQARAAREALAKLGYAAEVEVEARNDGLGPGSGVVLWAESDVGNVVGGDALGERGKPAEEVGREAAEKLAAVLKAGASLDPHMADMVVLYMALAQGRSRLSTTEATMHLQTNIYIVEQFLPVKFKLERAGPRYIIEVEGVGYP.

ATP contacts are provided by residues Gln-101 and 286-289 (HMAD). His-312 serves as the catalytic Tele-AMP-histidine intermediate.

This sequence belongs to the RNA 3'-terminal cyclase family. Type 1 subfamily.

The protein localises to the cytoplasm. The enzyme catalyses a 3'-end 3'-phospho-ribonucleotide-RNA + ATP = a 3'-end 2',3'-cyclophospho-ribonucleotide-RNA + AMP + diphosphate. Its function is as follows. Catalyzes the conversion of 3'-phosphate to a 2',3'-cyclic phosphodiester at the end of RNA. The mechanism of action of the enzyme occurs in 3 steps: (A) adenylation of the enzyme by ATP; (B) transfer of adenylate to an RNA-N3'P to produce RNA-N3'PP5'A; (C) and attack of the adjacent 2'-hydroxyl on the 3'-phosphorus in the diester linkage to produce the cyclic end product. The biological role of this enzyme is unknown but it is likely to function in some aspects of cellular RNA processing. In Pyrobaculum neutrophilum (strain DSM 2338 / JCM 9278 / NBRC 100436 / V24Sta) (Thermoproteus neutrophilus), this protein is RNA 3'-terminal phosphate cyclase.